We begin with the raw amino-acid sequence, 383 residues long: Izumo sperm-egg fusion protein 1 (383 aa).

An N-terminal signal peptide occupies residues 1-21; that stretch reads MGLHFTLLLAALANCLCPARL. Disulfide bonds link cysteine 22–cysteine 149, cysteine 25–cysteine 152, cysteine 135–cysteine 159, cysteine 139–cysteine 165, and cysteine 182–cysteine 233. Residues 22 to 306 are Extracellular-facing; that stretch reads CIICDPFVVA…HRPEKKLKSR (285 aa). Residues 148–160 form an important for interaction with IZUMO1R region; sequence WCNKCEKQMHFCR. Positions 167–251 constitute an Ig-like C2-type domain; sequence ERQIEVHRLE…PATIIYYHVT (85 aa). A glycan (N-linked (GlcNAc...) asparagine) is linked at asparagine 204. The chain crosses the membrane as a helical span at residues 307–327; it reads LLILLILGFVVLVASVIASVL. The Cytoplasmic portion of the chain corresponds to 328-383; sequence HFRKTRVKSKNSNVENKTSAAEFKSEAESPQKMGSRKLSQAEFHTDSSDKVEEADN. The tract at residues 335 to 383 is disordered; the sequence is KSKNSNVENKTSAAEFKSEAESPQKMGSRKLSQAEFHTDSSDKVEEADN. Over residues 337–346 the composition is skewed to polar residues; the sequence is KNSNVENKTS. Phosphoserine occurs at positions 339, 346, and 366. A compositionally biased stretch (basic and acidic residues) spans 370 to 383; sequence FHTDSSDKVEEADN. At threonine 372 the chain carries Phosphothreonine.

This sequence belongs to the Izumo family. Monomer, homodimer; disulfide-linked and homooligomer; depending on the context. Interacts with IZUMO1R/JUNO. IZUMO1 and IZUMO1R/JUNO form a complex with 1:1 stoichiometry. In gamete recognition, IZUMO1R/JUNO first binds to monomeric IZUMO1. The weak, but specific interaction with IZUMO1R/JUNO induces IZUMO1 homodimerization. The process follows a tight binding phase where IZUMO1 bends the entire structure towards the sperm membrane side through a thiol-disulfide exchange reaction. The molecule no longer binds to IZUMO1R/JUNO and instead binds to a putative second oocyte receptor. Interacts with ACE3. Part of a oolemmal binding multimeric complex (IZUMO1 complex) composed at least of IZUMO1 and GLIPR1L1; the complex assemblage is influenced by the maturation status of the male germ cell. Interacts with GLIPR1L1. Interacts with FREY; the interaction retains IZUMO1 at the endoplasmic reticulum membrane and coordinates IZUMO1 complex assembly. Interacts with WDR54. Forms a complex with SPACA6 and TMEM81 on spermatocyte cell membrane. Post-translationally, N-glycosylated. Glycosylation is not essential for fusion and for proper protein trafficking in sperm. In terms of processing, phosphorylated. The cytoplasmic C-terminus is phosphorylated and undergoes phosphorylation changes during epididymal transit. As to expression, expressed in sperm (at protein level).

The protein localises to the cell membrane. It localises to the cytoplasmic vesicle. The protein resides in the secretory vesicle. It is found in the acrosome membrane. Its function is as follows. Essential sperm cell-surface protein required for fertilization by acting as a ligand for IZUMO1R/JUNO receptor on egg. The IZUMO1:IZUMO1R/JUNO interaction is a necessary adhesion event between sperm and egg that is required for fertilization but is not sufficient for cell fusion. The ligand-receptor interaction probably does not act as a membrane 'fusogen'. Plays a critical role in sperm-oolemma binding prior to plasma membrane fusion. Can mediate cell-cell fusion in cultured mammalian cells independently of its binding to IZUMO1R/JUNO. The protein is Izumo sperm-egg fusion protein 1 of Rattus norvegicus (Rat).